Reading from the N-terminus, the 122-residue chain is Large ribosomal subunit protein uL14 (122 aa).

Belongs to the universal ribosomal protein uL14 family. In terms of assembly, part of the 50S ribosomal subunit. Forms a cluster with proteins L3 and L19. In the 70S ribosome, L14 and L19 interact and together make contacts with the 16S rRNA in bridges B5 and B8.

Functionally, binds to 23S rRNA. Forms part of two intersubunit bridges in the 70S ribosome. This is Large ribosomal subunit protein uL14 from Rickettsia africae (strain ESF-5).